The primary structure comprises 272 residues: Isoprenyl transferase (272 aa).

Asp-32 is a catalytic residue. Asp-32 contributes to the Mg(2+) binding site. Substrate contacts are provided by residues 33–36 (GNGR), Trp-37, Arg-45, His-49, and 77–79 (STE). The active-site Proton acceptor is Asn-80. Substrate contacts are provided by residues Trp-81, Arg-83, Arg-200, and 206-208 (RIS). Glu-219 is a binding site for Mg(2+).

The protein belongs to the UPP synthase family. Homodimer. Requires Mg(2+) as cofactor.

Functionally, catalyzes the condensation of isopentenyl diphosphate (IPP) with allylic pyrophosphates generating different type of terpenoids. This chain is Isoprenyl transferase, found in Prochlorococcus marinus subsp. pastoris (strain CCMP1986 / NIES-2087 / MED4).